The sequence spans 250 residues: 2,3-bisphosphoglycerate-dependent phosphoglycerate mutase (250 aa).

Residues 8 to 15 (RHGESQWN), 21 to 22 (TG), Arg-60, 87 to 90 (ERHY), Lys-98, 114 to 115 (RR), and 183 to 184 (GN) contribute to the substrate site. His-9 acts as the Tele-phosphohistidine intermediate in catalysis. Glu-87 (proton donor/acceptor) is an active-site residue.

Belongs to the phosphoglycerate mutase family. BPG-dependent PGAM subfamily. In terms of assembly, homodimer.

The catalysed reaction is (2R)-2-phosphoglycerate = (2R)-3-phosphoglycerate. It participates in carbohydrate degradation; glycolysis; pyruvate from D-glyceraldehyde 3-phosphate: step 3/5. Functionally, catalyzes the interconversion of 2-phosphoglycerate and 3-phosphoglycerate. This is 2,3-bisphosphoglycerate-dependent phosphoglycerate mutase from Bordetella pertussis (strain Tohama I / ATCC BAA-589 / NCTC 13251).